We begin with the raw amino-acid sequence, 146 residues long: Heat-stable 19 kDa antigen (146 aa).

The signal sequence occupies residues methionine 1 to alanine 20.

This sequence belongs to the cerato-platanin family. Post-translationally, glycosylated.

The protein resides in the secreted. The protein is Heat-stable 19 kDa antigen (CSA) of Coccidioides posadasii (strain C735) (Valley fever fungus).